The sequence spans 255 residues: Thiazole synthase (255 aa).

The active-site Schiff-base intermediate with DXP is the Lys96. 1-deoxy-D-xylulose 5-phosphate contacts are provided by residues Gly157, 183-184 (AG), and 205-206 (NS).

The protein belongs to the ThiG family. Homotetramer. Forms heterodimers with either ThiH or ThiS.

It is found in the cytoplasm. It carries out the reaction [ThiS sulfur-carrier protein]-C-terminal-Gly-aminoethanethioate + 2-iminoacetate + 1-deoxy-D-xylulose 5-phosphate = [ThiS sulfur-carrier protein]-C-terminal Gly-Gly + 2-[(2R,5Z)-2-carboxy-4-methylthiazol-5(2H)-ylidene]ethyl phosphate + 2 H2O + H(+). It functions in the pathway cofactor biosynthesis; thiamine diphosphate biosynthesis. In terms of biological role, catalyzes the rearrangement of 1-deoxy-D-xylulose 5-phosphate (DXP) to produce the thiazole phosphate moiety of thiamine. Sulfur is provided by the thiocarboxylate moiety of the carrier protein ThiS. In vitro, sulfur can be provided by H(2)S. The sequence is that of Thiazole synthase from Staphylococcus carnosus (strain TM300).